The chain runs to 398 residues: MFHPIEEALDALKKGEVIIVVDDEDRENEGDFVALAEHATPEVINFMATHGRGLICTPLSEEIADRLDLHPMVEHNTDSHHTAFTVSIDHRETKTGISAQERSFTVQALLDSKSVPSDFQRPGHIFPLIAKKGGVLKRAGHTEAAVDLAEACGSPGAGVICEIMNEDGTMARVPELIEIAKKHQLKMITIKDLIQYRYNLTTLVEREVDITLPTDFGTFKVYGYTNEVDGKEHVAFVMGDVPFGEEPVLVRVHSECLTGDVFGSHRCDCGPQLHAALNQIAAEGRGVLLYLRQEGRGIGLINKLKAYKLQEQGYDTVEANEALGFLPDLRNYGIGAQILRDLGVRNMKLLTNNPRKIAGLEGYGLSISERVPLQMEAKEHNKKYLQTKMNKLGHLLHF.

The interval 1-199 is DHBP synthase; sequence MFHPIEEALD…IKDLIQYRYN (199 aa). D-ribulose 5-phosphate is bound by residues 26–27, Asp31, 138–142, and Glu162; these read RE and RAGHT. Glu27 lines the Mg(2+) pocket. His141 contacts Mg(2+). The tract at residues 200–398 is GTP cyclohydrolase II; that stretch reads LTTLVEREVD…MNKLGHLLHF (199 aa). 251 to 255 serves as a coordination point for GTP; it reads RVHSE. Zn(2+)-binding residues include Cys256, Cys267, and Cys269. GTP contacts are provided by residues Gln272, 294-296, and Thr316; that span reads EGR. Residue Asp328 is the Proton acceptor; for GTP cyclohydrolase activity of the active site. Arg330 (nucleophile; for GTP cyclohydrolase activity) is an active-site residue. Residues Thr351 and Lys356 each contribute to the GTP site.

This sequence in the N-terminal section; belongs to the DHBP synthase family. In the C-terminal section; belongs to the GTP cyclohydrolase II family. The cofactor is Mg(2+). It depends on Mn(2+) as a cofactor. Requires Zn(2+) as cofactor.

The enzyme catalyses D-ribulose 5-phosphate = (2S)-2-hydroxy-3-oxobutyl phosphate + formate + H(+). It carries out the reaction GTP + 4 H2O = 2,5-diamino-6-hydroxy-4-(5-phosphoribosylamino)-pyrimidine + formate + 2 phosphate + 3 H(+). It participates in cofactor biosynthesis; riboflavin biosynthesis; 2-hydroxy-3-oxobutyl phosphate from D-ribulose 5-phosphate: step 1/1. It functions in the pathway cofactor biosynthesis; riboflavin biosynthesis; 5-amino-6-(D-ribitylamino)uracil from GTP: step 1/4. Its function is as follows. Catalyzes the conversion of D-ribulose 5-phosphate to formate and 3,4-dihydroxy-2-butanone 4-phosphate. Functionally, catalyzes the conversion of GTP to 2,5-diamino-6-ribosylamino-4(3H)-pyrimidinone 5'-phosphate (DARP), formate and pyrophosphate. The polypeptide is Riboflavin biosynthesis protein RibBA (Bacillus subtilis (strain 168)).